Here is a 377-residue protein sequence, read N- to C-terminus: Flap endonuclease 1 (377 aa).

The interval 1 to 104 is N-domain; that stretch reads MGIQGLAKLL…GELAKRTERR (104 aa). Asp34 contributes to the Mg(2+) binding site. 2 residues coordinate DNA: Arg47 and Arg70. 5 residues coordinate Mg(2+): Asp86, Glu158, Glu160, Asp179, and Asp181. An I-domain region spans residues 122-253; sequence NIDKFSRRLV…KRSVDLIRQH (132 aa). Glu158 serves as a coordination point for DNA. Residues Gly231 and Asp233 each coordinate DNA. Asp233 contacts Mg(2+). The segment at 336–344 is interaction with PCNA; sequence TQGRLDSFF. Residues 337–377 are disordered; it reads QGRLDSFFKVLPSPANKRKLQDGKGSQNKKAKTGGKFKRPK. Positions 363–377 are enriched in basic residues; sequence QNKKAKTGGKFKRPK.

Belongs to the XPG/RAD2 endonuclease family. FEN1 subfamily. In terms of assembly, interacts with PCNA. Three molecules of FEN1 bind to one PCNA trimer with each molecule binding to one PCNA monomer. PCNA stimulates the nuclease activity without altering cleavage specificity. Mg(2+) is required as a cofactor. Phosphorylated. Phosphorylation upon DNA damage induces relocalization to the nuclear plasma.

The protein localises to the nucleus. The protein resides in the nucleolus. It is found in the nucleoplasm. It localises to the mitochondrion. Its function is as follows. Structure-specific nuclease with 5'-flap endonuclease and 5'-3' exonuclease activities involved in DNA replication and repair. During DNA replication, cleaves the 5'-overhanging flap structure that is generated by displacement synthesis when DNA polymerase encounters the 5'-end of a downstream Okazaki fragment. It enters the flap from the 5'-end and then tracks to cleave the flap base, leaving a nick for ligation. Also involved in the long patch base excision repair (LP-BER) pathway, by cleaving within the apurinic/apyrimidinic (AP) site-terminated flap. Acts as a genome stabilization factor that prevents flaps from equilibrating into structures that lead to duplications and deletions. Also possesses 5'-3' exonuclease activity on nicked or gapped double-stranded DNA, and exhibits RNase H activity. Also involved in replication and repair of rDNA and in repairing mitochondrial DNA. The polypeptide is Flap endonuclease 1 (Nematostella vectensis (Starlet sea anemone)).